A 93-amino-acid chain; its full sequence is MTFTVLVSVRAKRDFNRLIVWLVERDPRAAARLGPLLEAALDSLTEAPSRGRSVGPTTREISIPFGQSAYVIRYRLLGSSVHVTRIWHGLEQR.

Belongs to the RelE toxin family.

In terms of biological role, toxic component of a type II toxin-antitoxin (TA) system. Its toxic effect is neutralized by coexpression with cognate antitoxin RelB1 but no other ParD or RelB antitoxin. In Caulobacter vibrioides (strain ATCC 19089 / CIP 103742 / CB 15) (Caulobacter crescentus), this protein is Toxin RelE1 (relE1).